We begin with the raw amino-acid sequence, 1121 residues long: tRNA (34-2'-O)-methyltransferase regulator WDR6 (1121 aa).

Methionine 1 carries the post-translational modification N-acetylmethionine. 19 WD repeats span residues 53–97 (IKRV…VVKI), 105–143 (WELWRSGLWNMSDWIWDARWLEGNIALALGHNSVVLYDP), 147–189 (CILQ…VWYP), 200–238 (APDRRISGHVGIIFSMSYLESKGLLATASEDRSVRIWKV), 247–285 (RVQNIGHCFGHSARVWQVKLLENYLISAGEDCVCLVWSH), 289–327 (ILQAFRGHQGRGIRAIAAHERQAWVITGGDDSGIRLWHL), 335–376 (LGVS…LYDV), 381–422 (WEQL…VVPI), 425–470 (PTAA…ISAA), 476–520 (IFVK…LFPS), 559–598 (PVSTLPSLHGKQGVTSVTCHGGYVYTTGRDGAYYQLFVRD), 604–642 (VLRQKSCRGMNWLAGLRIVPDGSMVILGFHANEFVVWNP), 645–684 (HEKLHIVNCGGGHRSWAFSDTEAAMAFAYLKDGDVMLYRA), 739–785 (LTDI…VWGI), 848–893 (RNRH…LFLL), 901–946 (QLLA…FWDL), 970–1012 (GTPS…VFVL), 1036–1073 (EEYSVPCAHAAHVTGLKILSPSIMVSASIDQRLTFWRL), and 1079–1121 (TFMN…NWYD).

Belongs to the WD repeat WDR6 family. Interacts with FTSJ1; the interaction is direct, and required for 2'-O-methylation of position 34 in substrate tRNAs. Interacts with IRS4. Interacts with STK11/LKB1. Ubiquitous.

It is found in the cytoplasm. Functionally, together with methyltransferase FTSJ1, methylates the 2'-O-ribose of nucleotides at position 34 of the tRNA anticodon loop of substrate tRNAs. Required for the correct positioning of the substrate tRNA for methylation. Required to suppress amino acid starvation-induced autophagy. Enhances the STK11/LKB1-induced cell growth suppression activity. This chain is tRNA (34-2'-O)-methyltransferase regulator WDR6 (WDR6), found in Homo sapiens (Human).